The sequence spans 120 residues: MSVDLAFDEQELLPAVAQDAESGDVLMLAYVSEEAVARSRETGYAHYYSRSREELWKKGGSSGHTQEIEEIRVDCDGDAILYLVEQAGGACHTGYDTCFHRTLDGDIVGEQVFDPEEIYE.

Asp-74 lines the Mg(2+) pocket. Cys-75 provides a ligand contact to Zn(2+). Mg(2+)-binding residues include Asp-76 and Asp-78. Positions 91 and 98 each coordinate Zn(2+).

The protein belongs to the PRA-CH family. Homodimer. It depends on Mg(2+) as a cofactor. Zn(2+) serves as cofactor.

The protein resides in the cytoplasm. It carries out the reaction 1-(5-phospho-beta-D-ribosyl)-5'-AMP + H2O = 1-(5-phospho-beta-D-ribosyl)-5-[(5-phospho-beta-D-ribosylamino)methylideneamino]imidazole-4-carboxamide. Its pathway is amino-acid biosynthesis; L-histidine biosynthesis; L-histidine from 5-phospho-alpha-D-ribose 1-diphosphate: step 3/9. Functionally, catalyzes the hydrolysis of the adenine ring of phosphoribosyl-AMP. In Natronomonas pharaonis (strain ATCC 35678 / DSM 2160 / CIP 103997 / JCM 8858 / NBRC 14720 / NCIMB 2260 / Gabara) (Halobacterium pharaonis), this protein is Phosphoribosyl-AMP cyclohydrolase.